The primary structure comprises 173 residues: Glutamyl-tRNA(Gln) amidotransferase subunit C-1, mitochondrial (173 aa).

Residues 1 to 23 (MIRIPFRLRPPPGRTLHSLVRTF) constitute a mitochondrion transit peptide. The segment at 51–70 (PSKVPQRPHKSTTTVGQSTP) is disordered. The segment covering 61 to 70 (STTTVGQSTP) has biased composition (polar residues).

It belongs to the GatC family. In terms of assembly, subunit of the heterotrimeric GatCAB amidotransferase (AdT) complex, composed of A, B and C subunits.

The protein localises to the mitochondrion. It carries out the reaction L-glutamyl-tRNA(Gln) + L-glutamine + ATP + H2O = L-glutaminyl-tRNA(Gln) + L-glutamate + ADP + phosphate + H(+). Its function is as follows. Allows the formation of correctly charged Gln-tRNA(Gln) through the transamidation of misacylated Glu-tRNA(Gln) in the mitochondria. The reaction takes place in the presence of glutamine and ATP through an activated gamma-phospho-Glu-tRNA(Gln). The sequence is that of Glutamyl-tRNA(Gln) amidotransferase subunit C-1, mitochondrial from Culex quinquefasciatus (Southern house mosquito).